The sequence spans 328 residues: Ribosomal RNA small subunit methyltransferase C (328 aa).

This sequence belongs to the methyltransferase superfamily. RsmC family. As to quaternary structure, monomer.

The protein localises to the cytoplasm. The enzyme catalyses guanosine(1207) in 16S rRNA + S-adenosyl-L-methionine = N(2)-methylguanosine(1207) in 16S rRNA + S-adenosyl-L-homocysteine + H(+). In terms of biological role, specifically methylates the guanine in position 1207 of 16S rRNA in the 30S particle. In Pasteurella multocida (strain Pm70), this protein is Ribosomal RNA small subunit methyltransferase C.